The sequence spans 757 residues: MLLVPRVPVVMQGKCGLLKISRPLQGSLSRGFHFSRAHRSEYDEEKVVIDEINKKLTPVDIQNQQKLRNIGISAHIDSGKTTFTERVLYYTKRIKEIHEVRGRDNVGATMDFMDLEREKGITIQSAATYCSWDKDKNSYHFNLIDTPGHIDFTIEVERALRVLDGAVLVVCAVSGVQSQTVTVDRQMRRYNVPRVTFINKMDRMGANPFKAIEQLNSKLKLPAAAVQVPIGAESELKGVVDLLDMKAYYNKGDNGEIIESGPIPEELKSLAEEKRQVLIETLADVDEHMAEIFLEEKEPTIQEMKDAIRRATIARKFTPVLMGSALANTGVQHVLDAIVDYLPNPSEVLNTGLDIAHEEAKVNLIPSVQQPFVGLAFKLEEGKYGQLTYIRVYQGRLKKGSYITNVKTGKKVKVSRLVRMHSNEMEDVDEVGSGEICATFGIDCSSGDTFSDGTLQYSMSSMFVPDAVVSLSITPKSKDSTNFSKALNRFQKEDPTFRVRFDPESKETVISGMGELHLEIYVERMKREYNVECITGKPQVSYRESITIPSEFDYTHKKQSGGAGQYARIIGDLSPVEGGNKSNVFETHVVGGRIPDKYLSACAKGFDEACERGPLIGHKVLNVKMLINDGAIHSVDSNELAFKVATLTAFRDAFLKAQPVIMEPIMIVSVTSPNEFQGNVIGLLNKLQAVIQETDNGHDEFTLRAECSLSTMFGFASSLRASTQGKGEFSLEFSHYAPTAPHVQKELIAEFQKKQKK.

The transit peptide at 1 to 39 directs the protein to the mitochondrion; sequence MLLVPRVPVVMQGKCGLLKISRPLQGSLSRGFHFSRAHR. In terms of domain architecture, tr-type G spans 65 to 346; the sequence is QKLRNIGISA…AIVDYLPNPS (282 aa). Residues 74 to 81, 145 to 149, and 199 to 202 each bind GTP; these read AHIDSGKT, DTPGH, and NKMD.

The protein belongs to the TRAFAC class translation factor GTPase superfamily. Classic translation factor GTPase family. EF-G/EF-2 subfamily.

Its subcellular location is the mitochondrion. It functions in the pathway protein biosynthesis; polypeptide chain elongation. Functionally, mitochondrial GTPase that catalyzes the GTP-dependent ribosomal translocation step during translation elongation. During this step, the ribosome changes from the pre-translocational (PRE) to the post-translocational (POST) state as the newly formed A-site-bound peptidyl-tRNA and P-site-bound deacylated tRNA move to the P and E sites, respectively. Catalyzes the coordinated movement of the two tRNA molecules, the mRNA and conformational changes in the ribosome. The sequence is that of Elongation factor G, mitochondrial from Candida glabrata (strain ATCC 2001 / BCRC 20586 / JCM 3761 / NBRC 0622 / NRRL Y-65 / CBS 138) (Yeast).